The following is a 243-amino-acid chain: Ribonuclease 3 (243 aa).

The RNase III domain maps to 15 to 144 (NDTISKIINY…LIGAIYIDGG (130 aa)). Glu57 is a Mg(2+) binding site. Asp61 is an active-site residue. Mg(2+)-binding residues include Asn130 and Glu133. Glu133 is a catalytic residue. The region spanning 169–238 (DPKTSLQEWT…AELMLEKINN (70 aa)) is the DRBM domain.

Belongs to the ribonuclease III family. In terms of assembly, homodimer. It depends on Mg(2+) as a cofactor.

Its subcellular location is the cytoplasm. The enzyme catalyses Endonucleolytic cleavage to 5'-phosphomonoester.. Functionally, digests double-stranded RNA. Involved in the processing of primary rRNA transcript to yield the immediate precursors to the large and small rRNAs (23S and 16S). Processes some mRNAs, and tRNAs when they are encoded in the rRNA operon. Processes pre-crRNA and tracrRNA of type II CRISPR loci if present in the organism. The sequence is that of Ribonuclease 3 from Wolbachia sp. subsp. Brugia malayi (strain TRS).